The primary structure comprises 533 residues: DnaJ homolog subfamily C member 21 (533 aa).

Residues cysteine 3 to glutamate 70 enclose the J domain. Disordered stretches follow at residues glutamine 278–tyrosine 311, lysine 327–alanine 473, and lysine 503–arginine 533. 2 positions are modified to phosphoserine: serine 283 and serine 302. A compositionally biased stretch (basic and acidic residues) spans glutamine 291 to serine 302. The segment at tyrosine 315–arginine 339 adopts a C2H2-type 1 zinc-finger fold. Positions serine 357–asparagine 369 are enriched in polar residues. Serine 370 bears the Phosphoserine mark. Positions lysine 381–lysine 392 are enriched in basic residues. Residues proline 393–glutamate 403 show a composition bias toward polar residues. The segment covering serine 455 to aspartate 464 has biased composition (basic residues). The segment at serine 484–alanine 508 adopts a C2H2-type 2 zinc-finger fold. Position 512 is a phosphoserine (serine 512). Positions serine 512–serine 523 are enriched in low complexity. Residues arginine 524–arginine 533 show a composition bias toward basic residues.

As to quaternary structure, interacts with HSPA8, PA2G4 and ZNF622.

Its subcellular location is the cytoplasm. The protein localises to the nucleus. The protein resides in the nucleolus. Functionally, may act as a co-chaperone for HSP70. May play a role in ribosomal RNA (rRNA) biogenesis, possibly in the maturation of the 60S subunit. Binds the precursor 45S rRNA. In Bos taurus (Bovine), this protein is DnaJ homolog subfamily C member 21 (DNAJC21).